Reading from the N-terminus, the 588-residue chain is Solute carrier family 2, facilitated glucose transporter member 12 (588 aa).

Topologically, residues 1-28 are cytoplasmic; the sequence is MLAHSTAQDLILQQRSSDDHPQTNPRQT. The helical transmembrane segment at 29-49 threads the bilayer; the sequence is GCGAFIILSSVIAAISGLLVG. At 50-74 the chain is on the extracellular side; it reads YELGIISGALLQLQSLLELTCQQQE. A helical membrane pass occupies residues 75–95; the sequence is IVVSALLIGALVASLVGGCLI. The Cytoplasmic portion of the chain corresponds to 96–103; the sequence is DLYGRRTT. The helical transmembrane segment at 104 to 124 threads the bilayer; it reads IIFTSILLVFANLLPVVVVSY. Residues 125-131 are Extracellular-facing; it reads GSLIAGR. Residues 132–152 traverse the membrane as a helical segment; sequence IFIGVSISLSAIATCVYIAEL. Over 153–158 the chain is Cytoplasmic; it reads SPQDKR. Residues 159–179 traverse the membrane as a helical segment; the sequence is GMLVSLNELMIVAGILLAYIC. Residues 180–191 lie on the Extracellular side of the membrane; that stretch reads NYLFASVNNGWK. A helical membrane pass occupies residues 192-212; it reads YMFGLITPLAALQAVAMFFLP. Over 213-272 the chain is Cytoplasmic; that stretch reads RSPRFLIMKGYDDAAGKVLQKLRATTDINEELTAIKSSIKAEYQYKFLDLFCSRDNMRAR. A helical transmembrane segment spans residues 273–293; that stretch reads LLIGLTLSFFVQITGQPNILF. Topologically, residues 294–311 are extracellular; sequence YASTVLKSVGFQSTEAAS. The chain crosses the membrane as a helical span at residues 312–332; sequence LASTGIGVVKVVSTIPAIFLV. Residues 333-339 lie on the Cytoplasmic side of the membrane; it reads DKIGSKT. Residues 340–360 traverse the membrane as a helical segment; sequence FLCIGSAVMAVSLVSVGLVSL. Topologically, residues 361 to 459 are extracellular; that stretch reads QLDVNYNNIC…IPEYMKWLCL (99 aa). Residues asparagine 377, asparagine 395, and asparagine 419 are each glycosylated (N-linked (GlcNAc...) asparagine). Residues 460 to 480 form a helical membrane-spanning segment; sequence SSLLAFVAAFSIGLGPMAWLV. Residues 481-492 lie on the Cytoplasmic side of the membrane; that stretch reads QSEIFPAGIKGR. Residues 493–513 traverse the membrane as a helical segment; the sequence is AFAITSSMNWGMNLLISLTFL. Residues 514–522 lie on the Extracellular side of the membrane; it reads TLTEMIGLP. A helical transmembrane segment spans residues 523–543; that stretch reads WMLFGYALMSIASLVFVIMFV. The Cytoplasmic portion of the chain corresponds to 544-588; the sequence is PNTKGRPLEEISKELANRSYMCNAVCHRRRSKKKLTPVALIQSPA.

It belongs to the major facilitator superfamily. Sugar transporter (TC 2.A.1.1) family. Glucose transporter subfamily.

It is found in the cell membrane. Its subcellular location is the endomembrane system. It localises to the cytoplasm. The protein resides in the perinuclear region. It catalyses the reaction D-glucose(out) = D-glucose(in). In terms of biological role, insulin-regulated facilitative glucose transporter. The chain is Solute carrier family 2, facilitated glucose transporter member 12 from Xenopus laevis (African clawed frog).